The following is a 483-amino-acid chain: E3 ubiquitin-protein ligase TRIM50 (483 aa).

Residues 16 to 57 (CPICLEVFKEPLMLQCGHSYCKDCLDNLSQHLDSELCCPVCR) form an RING-type zinc finger. The segment at 84-125 (IEPTVCVHHRNPLSLFCEKDQEFICGLCGLLGSHQHHRVTPV) adopts a B box-type zinc-finger fold. Zn(2+)-binding residues include Cys89, His92, Cys111, and His117. Coiled-coil stretches lie at residues 127 to 169 (TVYS…NESD) and 203 to 236 (GLVA…GNES). A B30.2/SPRY domain is found at 275–474 (DIKLTVWKRL…LPMVLPPPSG (200 aa)). At Lys372 the chain carries N6-acetyllysine.

The protein belongs to the TRIM/RBCC family. As to quaternary structure, can form dimers and trimers. Interacts with several E2 ubiquitin-conjugating enzymes, including UBE2L6, UBE2E1, UBE2E3. No interaction with UBE2H. Interacts with BECN1. Interacts with SQSTM1. Interacts with NLRP3. Post-translationally, auto-ubiquitinated. Acetylated by EP300 and KAT2B. HDAC6 drives TRIM50 deacetylation. Acetylation antagonizes with TRIM50 ubiquitination. In terms of tissue distribution, expressed in the stomach.

It localises to the cytoplasm. It catalyses the reaction S-ubiquitinyl-[E2 ubiquitin-conjugating enzyme]-L-cysteine + [acceptor protein]-L-lysine = [E2 ubiquitin-conjugating enzyme]-L-cysteine + N(6)-ubiquitinyl-[acceptor protein]-L-lysine.. In terms of biological role, E3 ubiquitin-protein ligase that ubiquitinates Beclin-1/BECN1 in a 'Lys-63'-dependent manner enhancing its binding to ULK1. In turn, promotes starvation-induced autophagy activation. Also interacts with p62/SQSTM1 protein and thereby induces the formation and the autophagy clearance of aggresome-associated polyubiquitinated proteins through HDAC6 interaction. Also promotes NLRP3 inflammasome activation by directly inducing NLRP3 oligomerization independent of its E3 ligase function. The sequence is that of E3 ubiquitin-protein ligase TRIM50 (Trim50) from Mus musculus (Mouse).